A 458-amino-acid polypeptide reads, in one-letter code: GTPase Der (458 aa).

EngA-type G domains lie at 9 to 171 (KTIA…DLNQ) and 197 to 368 (IQVG…ECFS). GTP is bound by residues 15–22 (GQPNVGKS), 62–66 (DTGGM), 123–126 (NKID), 203–210 (GRVNVGKS), 250–254 (DTAGI), and 314–317 (NKWD). One can recognise a KH-like domain in the interval 369–453 (KRIPTSLLNS…PLILNAKDKK (85 aa)).

It belongs to the TRAFAC class TrmE-Era-EngA-EngB-Septin-like GTPase superfamily. EngA (Der) GTPase family. Associates with the 50S ribosomal subunit.

Its function is as follows. GTPase that plays an essential role in the late steps of ribosome biogenesis. This Helicobacter pylori (strain ATCC 700392 / 26695) (Campylobacter pylori) protein is GTPase Der.